A 276-amino-acid chain; its full sequence is UPF0328 protein ECU03_0010 (276 aa).

Disordered regions lie at residues 1–132 and 156–176; these read MAAP…PIIS and SFCQNTRDSPSLPPQRPNMVH. Residues 106–126 show a composition bias toward basic and acidic residues; that stretch reads HTEGCHTHEANPEPNTKHTET.

This sequence belongs to the UPF0328 family.

The polypeptide is UPF0328 protein ECU03_0010 (Encephalitozoon cuniculi (strain GB-M1) (Microsporidian parasite)).